The following is a 467-amino-acid chain: 2-succinylbenzoate--CoA ligase (467 aa).

This sequence belongs to the ATP-dependent AMP-binding enzyme family. MenE subfamily.

The catalysed reaction is 2-succinylbenzoate + ATP + CoA = 2-succinylbenzoyl-CoA + AMP + diphosphate. It participates in quinol/quinone metabolism; 1,4-dihydroxy-2-naphthoate biosynthesis; 1,4-dihydroxy-2-naphthoate from chorismate: step 5/7. It functions in the pathway quinol/quinone metabolism; menaquinone biosynthesis. In terms of biological role, converts 2-succinylbenzoate (OSB) to 2-succinylbenzoyl-CoA (OSB-CoA). The protein is 2-succinylbenzoate--CoA ligase of Listeria monocytogenes serotype 4b (strain F2365).